We begin with the raw amino-acid sequence, 369 residues long: 4beta-methylsterol monooxygenase (369 aa).

One can recognise a Rieske domain in the interval 29–135 (WYVVEIDGRL…VKAQWGLIWL (107 aa)). The [2Fe-2S] cluster site is built by cysteine 70, histidine 72, cysteine 89, and histidine 92.

The cofactor is [2Fe-2S] cluster.

It catalyses the reaction a 3beta-hydroxy-4,4-dimethylsteroid + 3 NADH + 3 O2 + 2 H(+) = a 3beta-hydroxy-4alpha-methylsteroid-4beta-carboxylate + 3 NAD(+) + 4 H2O. The catalysed reaction is 4,4-dimethyl-5alpha-cholesta-8,24-dien-3beta-ol + 3 NADH + 3 O2 + 2 H(+) = 4beta-carboxy-4alpha-methyl-5alpha-cholesta-8,24-dien-3beta-ol + 3 NAD(+) + 4 H2O. The enzyme catalyses a 3beta-hydroxy-4,4-dimethylsteroid + NADH + O2 + H(+) = a 3beta-hydroxy-4beta-hydroxymethyl-4alpha-methylsteroid + NAD(+) + H2O. It carries out the reaction a 3beta-hydroxy-4beta-hydroxymethyl-4alpha-methylsteroid + NADH + O2 + H(+) = a 3beta-hydroxy-4beta-formyl-4alpha-methylsteroid + NAD(+) + 2 H2O. It catalyses the reaction a 3beta-hydroxy-4beta-formyl-4alpha-methylsteroid + NADH + O2 = a 3beta-hydroxy-4alpha-methylsteroid-4beta-carboxylate + NAD(+) + H2O. The catalysed reaction is 4,4-dimethyl-5alpha-cholesta-8,24-dien-3beta-ol + NADH + O2 + H(+) = 4beta-hydroxymethyl-4alpha-methylzymosterol + NAD(+) + H2O. The enzyme catalyses 4beta-hydroxymethyl-4alpha-methylzymosterol + NADH + O2 + H(+) = 4beta-formylmethyl-4alpha-methyl-5alpha-cholesta-8,24-dien-3beta-ol + NAD(+) + 2 H2O. It carries out the reaction 4beta-formylmethyl-4alpha-methyl-5alpha-cholesta-8,24-dien-3beta-ol + NADH + O2 = 4beta-carboxy-4alpha-methyl-5alpha-cholesta-8,24-dien-3beta-ol + NAD(+) + H2O. It functions in the pathway steroid biosynthesis; sterol biosynthesis. Functionally, participates in the biosynthesis of bacterial sterols. Together with SdmB, removes one methyl group from the C-4 position of 4,4-dimethylated steroid molecules. SdmA oxidizes the sterol 4beta-methyl group into first a hydroxyl, then an aldehyde and finally a carboxylic acid group. The sequence is that of 4beta-methylsterol monooxygenase from Methylococcus capsulatus (strain ATCC 33009 / NCIMB 11132 / Bath).